Here is a 450-residue protein sequence, read N- to C-terminus: tRNA (guanine-N(7)-)-methyltransferase non-catalytic subunit TRM82 (450 aa).

Positions 69–82 (AAKKLKTNEGEAIE) are enriched in basic and acidic residues. The segment at 69-103 (AAKKLKTNEGEAIERPGNQRRVPLPGKDPKVPVPG) is disordered. WD repeat units lie at residues 108–147 (PVYQ…KDNC), 200–241 (GHVS…VIDK), and 245–285 (GHKE…LMSS).

It belongs to the WD repeat TRM82 family. As to quaternary structure, forms a heterodimer with the catalytic subunit TRM8.

The protein localises to the nucleus. It participates in tRNA modification; N(7)-methylguanine-tRNA biosynthesis. In terms of biological role, required for the formation of N(7)-methylguanine at position 46 (m7G46) in tRNA. In the complex, it is required to stabilize and induce conformational changes of the catalytic subunit. The polypeptide is tRNA (guanine-N(7)-)-methyltransferase non-catalytic subunit TRM82 (Eremothecium gossypii (strain ATCC 10895 / CBS 109.51 / FGSC 9923 / NRRL Y-1056) (Yeast)).